The primary structure comprises 591 residues: Aspartate--tRNA ligase (591 aa).

Residue Glu-172 coordinates L-aspartate. Residues 196-199 form an aspartate region; it reads QLFK. Arg-218 is an L-aspartate binding site. ATP contacts are provided by residues 218-220 and Gln-227; that span reads RDE. His-449 lines the L-aspartate pocket. An ATP-binding site is contributed by Glu-483. Arg-490 contacts L-aspartate. 535–538 contributes to the ATP binding site; the sequence is GLDR.

This sequence belongs to the class-II aminoacyl-tRNA synthetase family. Type 1 subfamily. In terms of assembly, homodimer.

Its subcellular location is the cytoplasm. It carries out the reaction tRNA(Asp) + L-aspartate + ATP = L-aspartyl-tRNA(Asp) + AMP + diphosphate. Functionally, catalyzes the attachment of L-aspartate to tRNA(Asp) in a two-step reaction: L-aspartate is first activated by ATP to form Asp-AMP and then transferred to the acceptor end of tRNA(Asp). This chain is Aspartate--tRNA ligase, found in Actinobacillus pleuropneumoniae serotype 7 (strain AP76).